The sequence spans 909 residues: Protein translocase subunit SecA (909 aa).

ATP contacts are provided by residues Gln-87 and 105–109; that span reads GEGKT. The tract at residues 246–265 is disordered; that stretch reads LEQQEKEDEEGKNGDGDYTI. Positions 254-265 are enriched in basic and acidic residues; the sequence is EEGKNGDGDYTI. Residue Asp-512 coordinates ATP. The span at 834–858 shows a compositional bias: basic and acidic residues; it reads ESDVEAVEEQRRQADEQPKQYEHET. The segment at 834 to 899 is disordered; sequence ESDVEAVEEQ…NDPCPCGSGL (66 aa). Residues 859 to 875 show a composition bias toward low complexity; the sequence is ASATQAPEQAPEAAPAA. Zn(2+) contacts are provided by Cys-893, Cys-895, Cys-904, and His-905.

This sequence belongs to the SecA family. As to quaternary structure, monomer and homodimer. Part of the essential Sec protein translocation apparatus which comprises SecA, SecYEG and auxiliary proteins SecDF-YajC and YidC. The cofactor is Zn(2+).

The protein resides in the cell inner membrane. It is found in the cytoplasm. The enzyme catalyses ATP + H2O + cellular proteinSide 1 = ADP + phosphate + cellular proteinSide 2.. Its function is as follows. Part of the Sec protein translocase complex. Interacts with the SecYEG preprotein conducting channel. Has a central role in coupling the hydrolysis of ATP to the transfer of proteins into and across the cell membrane, serving both as a receptor for the preprotein-SecB complex and as an ATP-driven molecular motor driving the stepwise translocation of polypeptide chains across the membrane. The polypeptide is Protein translocase subunit SecA (Pseudoalteromonas atlantica (strain T6c / ATCC BAA-1087)).